Consider the following 464-residue polypeptide: Phosphoenolpyruvate carboxylase (464 aa).

It belongs to the PEPCase type 2 family. As to quaternary structure, homotetramer. The cofactor is Mg(2+).

The catalysed reaction is oxaloacetate + phosphate = phosphoenolpyruvate + hydrogencarbonate. Catalyzes the irreversible beta-carboxylation of phosphoenolpyruvate (PEP) to form oxaloacetate (OAA), a four-carbon dicarboxylic acid source for the tricarboxylic acid cycle. This chain is Phosphoenolpyruvate carboxylase, found in Thermofilum pendens (strain DSM 2475 / Hrk 5).